Reading from the N-terminus, the 231-residue chain is Large ribosomal subunit protein uL1 (231 aa).

The protein belongs to the universal ribosomal protein uL1 family. As to quaternary structure, part of the 50S ribosomal subunit.

Functionally, binds directly to 23S rRNA. The L1 stalk is quite mobile in the ribosome, and is involved in E site tRNA release. Protein L1 is also a translational repressor protein, it controls the translation of the L11 operon by binding to its mRNA. The chain is Large ribosomal subunit protein uL1 from Halalkalibacterium halodurans (strain ATCC BAA-125 / DSM 18197 / FERM 7344 / JCM 9153 / C-125) (Bacillus halodurans).